Here is a 128-residue protein sequence, read N- to C-terminus: Lymphocyte antigen 6D (128 aa).

An N-terminal signal peptide occupies residues 1–20; that stretch reads MKTVLLFLVALAAAAGPAQA. Positions 21-108 constitute a UPAR/Ly6 domain; it reads LRCHVCTSSS…WQSAAPARTS (88 aa). Intrachain disulfides connect cysteine 23–cysteine 45, cysteine 26–cysteine 32, cysteine 38–cysteine 63, cysteine 67–cysteine 86, and cysteine 87–cysteine 92. A lipid anchor (GPI-anchor amidated serine) is attached at serine 98. Residues 99 to 128 constitute a propeptide, removed in mature form; the sequence is WQSAAPARTSAHLGLALACGLLALLWAPGL.

Its subcellular location is the cell membrane. May act as a specification marker at earliest stage specification of lymphocytes between B- and T-cell development. Marks the earliest stage of B-cell specification. This Bos taurus (Bovine) protein is Lymphocyte antigen 6D (LY6D).